Consider the following 298-residue polypeptide: Methylsterol monooxygenase 1-1 (298 aa).

Helical transmembrane passes span 42-62 (ILFL…VELA), 96-116 (FILV…MIEI), and 118-138 (SGLP…YFLI). Residues 132-267 (LVVYFLIEDY…FTYCDYIYGT (136 aa)) form the Fatty acid hydroxylase domain. A Histidine box-1 motif is present at residues 147-151 (HRFFH). The Histidine box-2 signature appears at 160–164 (HRVHH). A helical transmembrane segment spans residues 189–209 (TFMGPAIAPGHMITFWLWIAL). The short motif at 239 to 245 (YHDYHHY) is the Histidine box-3 element.

This sequence belongs to the sterol desaturase family. Interacts with ACBP1. Fe cation serves as cofactor. Expressed in rosettes, stems, roots, floral buds, flowers and siliques.

Its subcellular location is the endoplasmic reticulum membrane. The catalysed reaction is 4,4-dimethyl-5alpha-cholest-7-en-3beta-ol + 6 Fe(II)-[cytochrome b5] + 3 O2 + 5 H(+) = 4alpha-carboxy-4beta-methyl-5alpha-cholest-7-ene-3beta-ol + 6 Fe(III)-[cytochrome b5] + 4 H2O. The enzyme catalyses 24-methylenecycloartanol + 6 Fe(II)-[cytochrome b5] + 3 O2 + 5 H(+) = 4alpha-carboxy-4beta,14alpha-dimethyl-9beta,19-cyclo-5alpha-ergost-24(24(1))-en-3beta-ol + 6 Fe(III)-[cytochrome b5] + 4 H2O. Non-heme iron oxygenase involved in sterols biosynthesis by catalyzing the removal of the first methyl group at the C-4 position. 4,4-dimethyl-9-beta,19-cyclopropylsterols such as 24-methylenecycloartanol are the preferred substrates. Acts as a rate-limiting enzyme in the sterol pathway via interaction with ACBP1; sterols serve as lipid modulators for gene expression of homeodomain-leucine zipper IV transcription factors. Together with SMO1-2, involved in the maintenance of sterol composition to balance auxin and cytokinin activities during embryogenesis. The polypeptide is Methylsterol monooxygenase 1-1 (Arabidopsis thaliana (Mouse-ear cress)).